Here is a 289-residue protein sequence, read N- to C-terminus: MLGFLNLHKPTGMTSHDCVGKVRRICGLKRVGHGGTLDPLATGVLPIALGPATRLLHYLPDQKTYQATIQFGLTTTTDDLAGDILSEQSANHLAQEVVEKALPQFLGSIEQRPPAYSAIQVKGQRLYDLARQGKDVTAPLRQVEVFDIQILDWQGGEKSELQVEIACGPGTYIRSIARDLGEVLGTGATLAQLTRTLSCGFALADSLTFETLAEQVQAGTFSPLEPSFSLQQPILHLPPAEAQRFCWGQKLPQDCADGMMQVHDTSDRFLGMGEIIDGLLKPKVVLPAQ.

Aspartate 38 (nucleophile) is an active-site residue.

This sequence belongs to the pseudouridine synthase TruB family. Type 1 subfamily.

It carries out the reaction uridine(55) in tRNA = pseudouridine(55) in tRNA. In terms of biological role, responsible for synthesis of pseudouridine from uracil-55 in the psi GC loop of transfer RNAs. The polypeptide is tRNA pseudouridine synthase B (Acaryochloris marina (strain MBIC 11017)).